A 124-amino-acid polypeptide reads, in one-letter code: Peptidyl-tRNA hydrolase (124 aa).

It belongs to the PTH2 family.

Its subcellular location is the cytoplasm. The enzyme catalyses an N-acyl-L-alpha-aminoacyl-tRNA + H2O = an N-acyl-L-amino acid + a tRNA + H(+). The natural substrate for this enzyme may be peptidyl-tRNAs which drop off the ribosome during protein synthesis. This chain is Peptidyl-tRNA hydrolase, found in Aeropyrum pernix (strain ATCC 700893 / DSM 11879 / JCM 9820 / NBRC 100138 / K1).